The chain runs to 113 residues: Photosystem II reaction center Psb28 protein (113 aa).

The protein belongs to the Psb28 family. Part of the photosystem II complex.

The protein resides in the cellular thylakoid membrane. This Nostoc punctiforme (strain ATCC 29133 / PCC 73102) protein is Photosystem II reaction center Psb28 protein.